Here is a 277-residue protein sequence, read N- to C-terminus: S-formylglutathione hydrolase FrmB (277 aa).

Catalysis depends on charge relay system residues Ser-145, Asp-221, and His-254.

Belongs to the esterase D family.

It carries out the reaction S-formylglutathione + H2O = formate + glutathione + H(+). Functionally, serine hydrolase involved in the detoxification of formaldehyde. Hydrolyzes S-formylglutathione to glutathione and formate. In Escherichia coli O6:H1 (strain CFT073 / ATCC 700928 / UPEC), this protein is S-formylglutathione hydrolase FrmB (frmB).